We begin with the raw amino-acid sequence, 165 residues long: Chemotaxis protein CheW (165 aa).

This sequence belongs to the CheW family.

In terms of biological role, plays an essential role in chemotaxis signal transduction system in order to colonize the host stomach. This is Chemotaxis protein CheW from Helicobacter pylori (strain ATCC 700392 / 26695) (Campylobacter pylori).